We begin with the raw amino-acid sequence, 858 residues long: G2-specific protein kinase nim-1 (858 aa).

The Protein kinase domain occupies 7-290; sequence YELLEKIGHG…TATLLNLPIV (284 aa). ATP is bound by residues 13-21 and Lys-36; that span reads IGHGSFGII. Asp-161 acts as the Proton acceptor in catalysis. Thr-194 bears the Phosphothreonine; by autocatalysis mark. Residues 291 to 383 adopt a coiled-coil conformation; sequence RLMRKEKEVV…QARVEAELQR (93 aa). 2 disordered regions span residues 495–693 and 747–858; these read TKAP…LPQA and SAVD…LSQS. Basic and acidic residues predominate over residues 516–525; that stretch reads SNWEVPRETE. Acidic residues predominate over residues 526-535; sequence MIDSGDESEA. 2 stretches are compositionally biased toward polar residues: residues 548–572 and 580–598; these read SSKNPFSTVTTRSRPSLNSQQNSNV and SKQTLATRSKTVSGVSSIG. Low complexity predominate over residues 636–648; sequence SANNINNSSNGGS. The segment covering 650-661 has biased composition (polar residues); that stretch reads APSSTVTSNITV. The span at 676 to 691 shows a compositional bias: low complexity; that stretch reads SSFSQQQNNQPQQSLP. Residues 760–780 are compositionally biased toward polar residues; that stretch reads GQSQLPTRPRSQPQPITANFE. A compositionally biased stretch (low complexity) spans 781–802; that stretch reads QQQQQQQSNTNSISSSNSAGSG.

It belongs to the protein kinase superfamily. CAMK Ser/Thr protein kinase family.

It is found in the nucleus. The catalysed reaction is L-seryl-[protein] + ATP = O-phospho-L-seryl-[protein] + ADP + H(+). It catalyses the reaction L-threonyl-[protein] + ATP = O-phospho-L-threonyl-[protein] + ADP + H(+). In terms of biological role, protein kinase that plays an important role in mitotic regulation. The sequence is that of G2-specific protein kinase nim-1 (nim-1) from Neurospora crassa (strain ATCC 24698 / 74-OR23-1A / CBS 708.71 / DSM 1257 / FGSC 987).